Reading from the N-terminus, the 341-residue chain is MFRSMLVRSSASAKQAVIRRSFSSGSVPERKVAILGAAGGIGQPLALLMKLNPLVSSLSLYDIANTPGVAADVGHINTRSEVVGYMGDDNLAKALEGADLVIIPAGVPRKPGMTRDDLFNINAGIVKNLCTAIAKYCPHALINMISNPVNSTVPIAAEIFKKAGMYDEKKLFGVTTLDVVRARTFYAGKANVPVAEVNVPVIGGHAGVTILPLFSQATPQANLSSDILTALTKRTQDGGTEVVEAKAGKGSATLSMAYAGALFADACLKGLNGVPDVIECSYVQSTITELPFFASKVRLGKNGVEEVLDLGPLSDFEKEGLEALKPELKSSIEKGVKFANQ.

A mitochondrion-targeting transit peptide spans 1–22 (MFRSMLVRSSASAKQAVIRRSF). NAD(+) is bound by residues 36 to 42 (GAAGGIG) and D62. Substrate is bound by residues R109 and R115. NAD(+) is bound by residues N122 and 145 to 147 (ISN). Residues N147 and R181 each contribute to the substrate site. H205 serves as the catalytic Proton acceptor. M256 is an NAD(+) binding site.

This sequence belongs to the LDH/MDH superfamily. MDH type 1 family. In terms of assembly, homodimer. In terms of processing, forms intramolecular disulfide bonds. In terms of tissue distribution, expressed in rosette leaves.

The protein resides in the mitochondrion matrix. The enzyme catalyses (S)-malate + NAD(+) = oxaloacetate + NADH + H(+). Its activity is regulated as follows. Negatively regulated by ATP. Not redox-regulated. The formation of intramolecular disulfide bonds does not alter enzymatic activity. Catalyzes a reversible NAD-dependent dehydrogenase reaction involved in central metabolism and redox homeostasis between organelle compartments. Required for carbon dioxide and energy partitioning in leaves. May limit photorespiration during the dark phase. Its activity is essential to shuttle reductants out from the mitochondria to support the photorespiratory flux. Can convert 2-oxoglutarate to (S)-2-hydroxyglutarate in vitro. In Arabidopsis thaliana (Mouse-ear cress), this protein is Malate dehydrogenase 1, mitochondrial.